The following is a 582-amino-acid chain: 2-isopropylmalate synthase (582 aa).

Residues 40 to 314 (PRWCAVDLRD…DPMIDFSDID (275 aa)) enclose the Pyruvate carboxyltransferase domain. 4 residues coordinate Mg(2+): Asp49, His253, His255, and Asn289. The tract at residues 456 to 582 (SPAGHPGGQW…NRAIRDNQVD (127 aa)) is regulatory domain.

Belongs to the alpha-IPM synthase/homocitrate synthase family. LeuA type 2 subfamily. In terms of assembly, homodimer. It depends on Mg(2+) as a cofactor.

It localises to the cytoplasm. It carries out the reaction 3-methyl-2-oxobutanoate + acetyl-CoA + H2O = (2S)-2-isopropylmalate + CoA + H(+). The protein operates within amino-acid biosynthesis; L-leucine biosynthesis; L-leucine from 3-methyl-2-oxobutanoate: step 1/4. Its function is as follows. Catalyzes the condensation of the acetyl group of acetyl-CoA with 3-methyl-2-oxobutanoate (2-ketoisovalerate) to form 3-carboxy-3-hydroxy-4-methylpentanoate (2-isopropylmalate). This chain is 2-isopropylmalate synthase, found in Renibacterium salmoninarum (strain ATCC 33209 / DSM 20767 / JCM 11484 / NBRC 15589 / NCIMB 2235).